The primary structure comprises 131 residues: MTDCDLCGKGIPTVIPVRTYPPLLRFAYPEGVWKGLCETCLDSAQKTYLEVNRNHTSCRRGKCSLCGSKTGVFSVELQIPDFSKGIVRKDVDVCYRCLKLVDEAYIRYKREQIEQDHEQGRIHGHEHVHPH.

[2Fe-2S] cluster is bound by residues C58, C63, and C66.

It belongs to the FpoO family. The FPO complex is composed of at least 13 different subunits. It depends on [2Fe-2S] cluster as a cofactor.

It catalyses the reaction methanophenazine + reduced coenzyme F420-(gamma-L-Glu)(n) = dihydromethanophenazine + oxidized coenzyme F420-(gamma-L-Glu)(n) + H(+). In terms of biological role, component of the F(420)H(2) dehydrogenase (FPO complex) which is part of the energy-conserving F(420)H(2):heterodisulfide oxidoreductase system. The membrane-bound electron transfer system of the complex plays an important role in the metabolism of methylotrophic methanogens when the organisms grow on methanol or methylamines. Catalyzes the oxidation of methanophenazine to dihydromethanophenazine. It shuttles electrons from F(420)H(2), via FAD and iron-sulfur (Fe-S) centers, to methanophenazine (an electron carrier in the membrane). It couples the redox reaction to proton translocation (for every two electrons transferred, two hydrogen ions are translocated across the cytoplasmic membrane), and thus conserves the redox energy in a proton gradient. It also catalyzes the oxidation of F(420)H(2) with quinones such as 2,3-dimethyl-1,4-naphthoquinone, 2-methyl-1,4-naphthoquinone and tetramethyl-p-benzoquinone. The sequence is that of F(420)H(2) dehydrogenase subunit O (fpoO) from Methanosarcina mazei (strain ATCC BAA-159 / DSM 3647 / Goe1 / Go1 / JCM 11833 / OCM 88) (Methanosarcina frisia).